Here is an 85-residue protein sequence, read N- to C-terminus: Putative membrane protein insertion efficiency factor (85 aa).

This sequence belongs to the UPF0161 family.

The protein resides in the cell inner membrane. Could be involved in insertion of integral membrane proteins into the membrane. This is Putative membrane protein insertion efficiency factor from Escherichia coli O6:H1 (strain CFT073 / ATCC 700928 / UPEC).